Consider the following 534-residue polypeptide: (R)-citramalate synthase (534 aa).

One can recognise a Pyruvate carboxyltransferase domain in the interval Phe-11–Arg-274.

It belongs to the alpha-IPM synthase/homocitrate synthase family.

The catalysed reaction is pyruvate + acetyl-CoA + H2O = (3R)-citramalate + CoA + H(+). The protein operates within amino-acid biosynthesis; L-isoleucine biosynthesis; 2-oxobutanoate from pyruvate: step 1/3. Its function is as follows. Catalyzes the condensation of pyruvate and acetyl-coenzyme A to form (R)-citramalate. This is (R)-citramalate synthase from Streptomyces coelicolor (strain ATCC BAA-471 / A3(2) / M145).